We begin with the raw amino-acid sequence, 300 residues long: Tyrosine recombinase XerC (300 aa).

A Core-binding (CB) domain is found at 2–88 (TQEGQLEKRF…SLRSFYTFLL (87 aa)). Positions 109–294 (RLPKFFYSEE…TKEHLKSTYM (186 aa)) constitute a Tyr recombinase domain. Active-site residues include R150, K174, H246, R249, and H272. Y281 acts as the O-(3'-phospho-DNA)-tyrosine intermediate in catalysis.

This sequence belongs to the 'phage' integrase family. XerC subfamily. As to quaternary structure, forms a cyclic heterotetrameric complex composed of two molecules of XerC and two molecules of XerD.

Its subcellular location is the cytoplasm. In terms of biological role, site-specific tyrosine recombinase, which acts by catalyzing the cutting and rejoining of the recombining DNA molecules. The XerC-XerD complex is essential to convert dimers of the bacterial chromosome into monomers to permit their segregation at cell division. It also contributes to the segregational stability of plasmids. This Listeria innocua serovar 6a (strain ATCC BAA-680 / CLIP 11262) protein is Tyrosine recombinase XerC.